The chain runs to 354 residues: Type II methylase M.HgiDII (354 aa).

Residues 3-344 form the SAM-dependent MTase C5-type domain; sequence GAVIDLFCGV…KSIKRFLEGL (342 aa). Residue Cys79 is part of the active site.

This sequence belongs to the class I-like SAM-binding methyltransferase superfamily. C5-methyltransferase family.

The enzyme catalyses a 2'-deoxycytidine in DNA + S-adenosyl-L-methionine = a 5-methyl-2'-deoxycytidine in DNA + S-adenosyl-L-homocysteine + H(+). In terms of biological role, a methylase that recognizes the double-stranded sequence 5'-GTCGAC-3', methylates C-? on both strands and protects the DNA from cleavage by the HgiDII endonuclease. The polypeptide is Type II methylase M.HgiDII (Herpetosiphon aurantiacus (Herpetosiphon giganteus)).